The following is a 422-amino-acid chain: Serine protease inhibitor A3A (422 aa).

The N-terminal stretch at Met-1–Ala-17 is a signal peptide. Residues Asn-218, Asn-230, and Asn-271 are each glycosylated (N-linked (GlcNAc...) asparagine). Residues His-369–Val-394 form an RCL region.

It belongs to the serpin family.

Its subcellular location is the secreted. The polypeptide is Serine protease inhibitor A3A (Serpina3a) (Mus musculus (Mouse)).